The chain runs to 187 residues: Hypoxanthine/guanine phosphoribosyltransferase (187 aa).

It belongs to the purine/pyrimidine phosphoribosyltransferase family. Archaeal HPRT subfamily. As to quaternary structure, homodimer.

Its subcellular location is the cytoplasm. The enzyme catalyses IMP + diphosphate = hypoxanthine + 5-phospho-alpha-D-ribose 1-diphosphate. The catalysed reaction is GMP + diphosphate = guanine + 5-phospho-alpha-D-ribose 1-diphosphate. It participates in purine metabolism; IMP biosynthesis via salvage pathway; IMP from hypoxanthine: step 1/1. Functionally, catalyzes a salvage reaction resulting in the formation of IMP that is energically less costly than de novo synthesis. This is Hypoxanthine/guanine phosphoribosyltransferase from Methanocorpusculum labreanum (strain ATCC 43576 / DSM 4855 / Z).